A 414-amino-acid chain; its full sequence is MATQRASGLLQRLAQGSLVKQILVGLILGILLAWISKPAAEAVGLLGTLFVGALKAVAPVLVLMLVMASIANHQHGQKTNIRPILFLYLLGTFSAALAAVVFSFAFPSTLHLSSSAQDIVPPSGIVEVLRGLLMSMVSNPIDALLNANYIGILVWAVGLGFALRHGNETTKNLVNDMSNAVTFMVKLVIRFAPVGIFGLVSSTLATTGFSTLWGYAHLLVVLIGCMLLVALVVNPLLVFWKIRRNPYPLVFACLRESGVYAFFTRSSAANIPVNMALCEKLNLDRDTYSVSIPLGATINMAGAAITITVLTLAAVHTLGVPVDLPTALLLSVVASLCACGASGVAGGSLLLIPLACNMFGIPNDIAMQVVAVGFIIGVLQDSCETALNSSTDVLFTAAACQAEDERLANNALRS.

Transmembrane regions (helical) follow at residues 16 to 36 (GSLV…AWIS), 46 to 66 (LGTL…LMLV), 84 to 104 (ILFL…VFSF), 143 to 163 (ALLN…GFAL), 180 to 200 (AVTF…FGLV), 219 to 239 (LVVL…LLVF), 300 to 320 (MAGA…TLGV), and 332 to 352 (VVAS…LLLI).

Belongs to the dicarboxylate/amino acid:cation symporter (DAACS) (TC 2.A.23) family.

Its subcellular location is the cell inner membrane. It catalyses the reaction L-serine(in) + Na(+)(in) = L-serine(out) + Na(+)(out). The catalysed reaction is L-threonine(in) + Na(+)(in) = L-threonine(out) + Na(+)(out). Its function is as follows. Involved in the import of serine and threonine into the cell, with the concomitant import of sodium (symport system). The polypeptide is Serine/threonine transporter SstT (Salmonella dublin (strain CT_02021853)).